Here is a 279-residue protein sequence, read N- to C-terminus: Early nodulin-like protein 18 (279 aa).

The N-terminal stretch at 1-24 is a signal peptide; it reads MAGAVATVSVGLAWLGLMAAAASA. The region spanning 25-133 is the Phytocyanin domain; that stretch reads TQFRVGGGRG…GEKLVVVVMA (109 aa). An intrachain disulfide couples Cys-82 to Cys-121. N-linked (GlcNAc...) asparagine glycosylation occurs at Asn-83. The disordered stretch occupies residues 138–256; it reads RHAPPPSPPA…ANDRSGAAAA (119 aa). Pro residues predominate over residues 140 to 168; sequence APPPSPPAVPPPVAPVPMPSPASSPPSPA. Positions 169–185 are enriched in low complexity; that stretch reads PAAATPSLAPSPVATTP. Over residues 186–199 the composition is skewed to pro residues; the sequence is SPSPSVSPMAPAPA. 2 stretches are compositionally biased toward low complexity: residues 212 to 226 and 234 to 256; these read AAMA…GGVA and TDGA…AAAA. The N-linked (GlcNAc...) asparagine glycan is linked to Asn-238. The GPI-anchor amidated serine moiety is linked to residue Ser-251. A propeptide spans 252-279 (removed in mature form); the sequence is GAAAAAPVVAGVVVTSLGAYIGYAMLAI.

This sequence belongs to the early nodulin-like (ENODL) family. As to expression, specifically expressed in reproductive tissues. Mainly observed in developing seeds and in mature leaves.

The protein localises to the cell membrane. Functionally, may act as a carbohydrate transporter. Promotes tolerance to salt stress in a redox-dependent manner. This Oryza sativa subsp. japonica (Rice) protein is Early nodulin-like protein 18.